Here is a 188-residue protein sequence, read N- to C-terminus: Probable nicotinate-nucleotide adenylyltransferase (188 aa).

Belongs to the NadD family.

The catalysed reaction is nicotinate beta-D-ribonucleotide + ATP + H(+) = deamido-NAD(+) + diphosphate. It functions in the pathway cofactor biosynthesis; NAD(+) biosynthesis; deamido-NAD(+) from nicotinate D-ribonucleotide: step 1/1. Functionally, catalyzes the reversible adenylation of nicotinate mononucleotide (NaMN) to nicotinic acid adenine dinucleotide (NaAD). This is Probable nicotinate-nucleotide adenylyltransferase from Listeria monocytogenes serovar 1/2a (strain ATCC BAA-679 / EGD-e).